Reading from the N-terminus, the 226-residue chain is Large ribosomal subunit protein uL1 (226 aa).

This sequence belongs to the universal ribosomal protein uL1 family. Part of the 50S ribosomal subunit.

Functionally, binds directly to 23S rRNA. The L1 stalk is quite mobile in the ribosome, and is involved in E site tRNA release. Protein L1 is also a translational repressor protein, it controls the translation of the L11 operon by binding to its mRNA. The protein is Large ribosomal subunit protein uL1 of Selenomonas ruminantium.